Reading from the N-terminus, the 229-residue chain is Cytidylate kinase (229 aa).

12–20 (GPSGSGKGT) contacts ATP.

Belongs to the cytidylate kinase family. Type 1 subfamily.

The protein localises to the cytoplasm. The catalysed reaction is CMP + ATP = CDP + ADP. It catalyses the reaction dCMP + ATP = dCDP + ADP. This chain is Cytidylate kinase, found in Pseudomonas syringae pv. syringae (strain B728a).